The chain runs to 116 residues: UPF0102 protein IL0423 (116 aa).

This sequence belongs to the UPF0102 family.

The polypeptide is UPF0102 protein IL0423 (Idiomarina loihiensis (strain ATCC BAA-735 / DSM 15497 / L2-TR)).